The sequence spans 147 residues: Hemoglobin subunit beta-2 (147 aa).

N-acetylvaline is present on valine 2. Residues 3–147 form the Globin domain; it reads HLTDAEKATV…VASALAHKYH (145 aa). Position 13 is a phosphoserine (serine 13). Lysine 18 carries the N6-succinyllysine modification. 2 positions are modified to phosphoserine: serine 51 and serine 53. Heme b-binding residues include histidine 64 and histidine 93. Asymmetric dimethylarginine is present on arginine 105. Threonine 124 is subject to Phosphothreonine. Residue cysteine 126 is modified to Phosphoserine; in variant Ser-126.

This sequence belongs to the globin family. In terms of assembly, heterotetramer of two alpha chains and two beta chains. As to expression, red blood cells.

Functionally, involved in oxygen transport from the lung to the various peripheral tissues. This is Hemoglobin subunit beta-2 from Rattus norvegicus (Rat).